A 736-amino-acid chain; its full sequence is Catalase-peroxidase (736 aa).

Positions 96-224 (WHSAGTYRTG…LAAVQMGLIY (129 aa)) form a cross-link, tryptophyl-tyrosyl-methioninium (Trp-Tyr) (with M-250). The active-site Proton acceptor is H97. Positions 224–250 (YVNPEGPDGNPDPVASGRDVRETFGRM) form a cross-link, tryptophyl-tyrosyl-methioninium (Tyr-Met) (with W-96). Residue H265 coordinates heme b.

Belongs to the peroxidase family. Peroxidase/catalase subfamily. As to quaternary structure, homodimer or homotetramer. Heme b serves as cofactor. Formation of the three residue Trp-Tyr-Met cross-link is important for the catalase, but not the peroxidase activity of the enzyme.

It catalyses the reaction H2O2 + AH2 = A + 2 H2O. It carries out the reaction 2 H2O2 = O2 + 2 H2O. Bifunctional enzyme with both catalase and broad-spectrum peroxidase activity. This Pelobacter propionicus (strain DSM 2379 / NBRC 103807 / OttBd1) protein is Catalase-peroxidase.